The chain runs to 492 residues: UDP-N-acetylmuramyl-tripeptide synthetase 2 (492 aa).

Residue Ser-30 coordinates UDP-N-acetyl-alpha-D-muramoyl-L-alanyl-D-glutamate. ATP is bound at residue 111–117 (GTNGKTT). Residues 154–155 (TT), Ser-181, Gln-187, and Arg-189 each bind UDP-N-acetyl-alpha-D-muramoyl-L-alanyl-D-glutamate. Lys-221 bears the N6-carboxylysine mark.

It belongs to the MurCDEF family. MurE subfamily. Post-translationally, carboxylation is probably crucial for Mg(2+) binding and, consequently, for the gamma-phosphate positioning of ATP.

It is found in the cytoplasm. It functions in the pathway cell wall biogenesis; peptidoglycan biosynthesis. Its function is as follows. Catalyzes the addition of an amino acid to the nucleotide precursor UDP-N-acetylmuramoyl-L-alanyl-D-glutamate (UMAG) in the biosynthesis of bacterial cell-wall peptidoglycan. This Oceanobacillus iheyensis (strain DSM 14371 / CIP 107618 / JCM 11309 / KCTC 3954 / HTE831) protein is UDP-N-acetylmuramyl-tripeptide synthetase 2.